A 570-amino-acid polypeptide reads, in one-letter code: Sulfite reductase [NADPH] hemoprotein beta-component (570 aa).

[4Fe-4S] cluster contacts are provided by Cys-434, Cys-440, Cys-479, and Cys-483. Cys-483 lines the siroheme pocket.

Belongs to the nitrite and sulfite reductase 4Fe-4S domain family. Alpha(8)-beta(8). The alpha component is a flavoprotein, the beta component is a hemoprotein. Siroheme serves as cofactor. Requires [4Fe-4S] cluster as cofactor.

It carries out the reaction hydrogen sulfide + 3 NADP(+) + 3 H2O = sulfite + 3 NADPH + 4 H(+). It participates in sulfur metabolism; hydrogen sulfide biosynthesis; hydrogen sulfide from sulfite (NADPH route): step 1/1. Functionally, component of the sulfite reductase complex that catalyzes the 6-electron reduction of sulfite to sulfide. This is one of several activities required for the biosynthesis of L-cysteine from sulfate. The polypeptide is Sulfite reductase [NADPH] hemoprotein beta-component (Escherichia coli O127:H6 (strain E2348/69 / EPEC)).